Here is a 428-residue protein sequence, read N- to C-terminus: Enolase (428 aa).

Gln-163 is a (2R)-2-phosphoglycerate binding site. Glu-205 (proton donor) is an active-site residue. Residues Asp-242, Glu-286, and Asp-313 each coordinate Mg(2+). (2R)-2-phosphoglycerate is bound by residues Lys-338, Arg-367, Ser-368, and Lys-389. Lys-338 functions as the Proton acceptor in the catalytic mechanism.

This sequence belongs to the enolase family. The cofactor is Mg(2+).

The protein resides in the cytoplasm. It localises to the secreted. Its subcellular location is the cell surface. The catalysed reaction is (2R)-2-phosphoglycerate = phosphoenolpyruvate + H2O. It functions in the pathway carbohydrate degradation; glycolysis; pyruvate from D-glyceraldehyde 3-phosphate: step 4/5. Its function is as follows. Catalyzes the reversible conversion of 2-phosphoglycerate (2-PG) into phosphoenolpyruvate (PEP). It is essential for the degradation of carbohydrates via glycolysis. This Lactobacillus acidophilus (strain ATCC 700396 / NCK56 / N2 / NCFM) protein is Enolase.